Here is a 275-residue protein sequence, read N- to C-terminus: Probable aquaporin NIP7-1 (275 aa).

Positions Met-1–Asp-11 are enriched in basic and acidic residues. Residues Met-1–His-26 are disordered. The next 2 helical transmembrane spans lie at Ile-47–Ser-67 and Val-76–Ile-96. An NPA 1 motif is present at residues Asn-105 to Ser-107. 3 helical membrane-spanning segments follow: residues Ile-127 to Val-147, Val-161 to Leu-181, and Leu-192 to Ser-212. The short motif at Asn-217 to Ala-219 is the NPA 2 element. A helical membrane pass occupies residues Phe-231 to Thr-251. Ser-272 is subject to Phosphoserine.

Belongs to the MIP/aquaporin (TC 1.A.8) family. NIP (TC 1.A.8.12) subfamily. In terms of tissue distribution, expressed in floral buds.

It is found in the membrane. In terms of biological role, aquaporins facilitate the transport of water and small neutral solutes across cell membranes. This is Probable aquaporin NIP7-1 (NIP7-1) from Arabidopsis thaliana (Mouse-ear cress).